The following is a 123-amino-acid chain: Probable histone H2B 3 (123 aa).

The interval 1–31 (MAPPKPSAKGAKKAAKTVSKPKDGKKRKHAR) is disordered. O-linked (GlcNAc) serine glycosylation occurs at Ser110. Lys118 is covalently cross-linked (Glycyl lysine isopeptide (Lys-Gly) (interchain with G-Cter in ubiquitin)).

The protein belongs to the histone H2B family. As to quaternary structure, the nucleosome is a histone octamer containing two molecules each of H2A, H2B, H3 and H4 assembled in one H3-H4 heterotetramer and two H2A-H2B heterodimers. The octamer wraps approximately 147 bp of DNA. In terms of processing, monoubiquitination of Lys-118 gives a specific tag for epigenetic transcriptional activation and is also prerequisite for histone H3 'Lys-4' and 'Lys-79' methylation. Post-translationally, glcNAcylation at Ser-110 promotes monoubiquitination of Lys-118. It fluctuates in response to extracellular glucose, and associates with transcribed genes.

The protein localises to the nucleus. Its subcellular location is the chromosome. Core component of nucleosome. Nucleosomes wrap and compact DNA into chromatin, limiting DNA accessibility to the cellular machineries which require DNA as a template. Histones thereby play a central role in transcription regulation, DNA repair, DNA replication and chromosomal stability. DNA accessibility is regulated via a complex set of post-translational modifications of histones, also called histone code, and nucleosome remodeling. This Caenorhabditis elegans protein is Probable histone H2B 3 (his-41).